A 214-amino-acid chain; its full sequence is GTP-binding nuclear protein GSP1 (214 aa).

The Small GTPase Ran-type domain maps to 4-172; that stretch reads RELTYKICLI…LHLARIFTGR (169 aa). GTP is bound at residue 17–22; the sequence is GVGKTT. The segment at 34–42 is switch-I; it reads KNYNATVGA. GTP-binding positions include Gly-66, 121–124, and 151–153; these read NKID and SAK. The segment at 66–82 is switch-II; sequence GQEKKAVLKDVYYIGAS.

It belongs to the small GTPase superfamily. Ran family. In terms of assembly, found in a nuclear export complex with RanGTP, exportin and pre-miRNA.

The protein resides in the nucleus. In terms of biological role, GTP-binding protein involved in nucleocytoplasmic transport. Required for the import of protein into the nucleus and also for RNA export. This chain is GTP-binding nuclear protein GSP1 (GSP1), found in Encephalitozoon cuniculi (strain GB-M1) (Microsporidian parasite).